The sequence spans 428 residues: MTTLSPYDSMTPVTQAAYRAKAAAADLAPLPRAEKDDALLAIADALEVRTSEIVAANAKDVERAREAGTSEAIIDRLTLTPERVRAIAADVRDVVALPDPVGEVVRGSTLPNGIDLRQVRVPLGVVGIIYEARPNVTVDAAALCLKSGNAVLLRGSASAYESNTALVRVLRDAVGGAGLPADAVQLVPGESRDSVRELMRARGLVDVLIPRGGASLIRTVVEESTVPVIETGTGNCHVYVDAQADLDMAVDILINSKAQRPSVCNSAETLLVHQDIAAEFLPRALDALADAGVTVHADERVLAYAKDSKATVVEATTEDWDTEYLSYDIAAAVVDSLDRAVAHIRLWSSGHTEAIVTTSQQAARRFTQLVDSTTVAVNASTRFTDGGEFGFGAEIGISTQKLHARGPMGLPELTSTKYIVTGDGHVRR.

The protein belongs to the gamma-glutamyl phosphate reductase family.

It is found in the cytoplasm. The enzyme catalyses L-glutamate 5-semialdehyde + phosphate + NADP(+) = L-glutamyl 5-phosphate + NADPH + H(+). Its pathway is amino-acid biosynthesis; L-proline biosynthesis; L-glutamate 5-semialdehyde from L-glutamate: step 2/2. Functionally, catalyzes the NADPH-dependent reduction of L-glutamate 5-phosphate into L-glutamate 5-semialdehyde and phosphate. The product spontaneously undergoes cyclization to form 1-pyrroline-5-carboxylate. The chain is Gamma-glutamyl phosphate reductase from Streptomyces avermitilis (strain ATCC 31267 / DSM 46492 / JCM 5070 / NBRC 14893 / NCIMB 12804 / NRRL 8165 / MA-4680).